The sequence spans 595 residues: DNA-binding protein REB1 (595 aa).

Composition is skewed to basic and acidic residues over residues 25–46 and 54–71; these read KSGE…KEQD and DPGR…RDAN. The interval 25-208 is disordered; that stretch reads KSGEDDAVNK…IDDHVDDVSV (184 aa). The segment covering 75 to 84 has biased composition (low complexity); that stretch reads AVAAAAVAAA. Residues 114-123 are compositionally biased toward basic residues; that stretch reads KKSKKNKNKL. Polar residues predominate over residues 163–176; the sequence is NIASQHPDFQQYLN. A compositionally biased stretch (basic and acidic residues) spans 182-205; it reads EPKKEKSEERSYGDLSNIDDHVDD. The HTH myb-type domain maps to 333 to 384; the sequence is HIFEQRGKWTPEEDAELARWCAEKEGQWSNIGKVLGRMPEDCRDRWRNYVKC. Positions 360-382 form a DNA-binding region, H-T-H motif; sequence WSNIGKVLGRMPEDCRDRWRNYV. The Myb-like domain occupies 385–490; it reads GPNRAANKWS…QCRYKWNKLL (106 aa). Positions 414–456 are disordered; that stretch reads TAYEDGEDDEMKDSSTKIEDSGDADMLDVQDSDKKPSISNSKK. Residues 434-443 show a composition bias toward acidic residues; the sequence is SGDADMLDVQ.

The protein localises to the nucleus. DNA-binding protein that recognizes sites within both the enhancer and the promoter of rRNA transcription, as well as upstream of many genes transcribed by RNA polymerase II. It is essential for cell growth. May stimulate or inhibit transcription. Specifically recognizes the sequence 5'-CCGGGTA-3' or 5'-CGGGTRR-3' (where R is any purine). This is DNA-binding protein REB1 (REB1) from Kluyveromyces lactis (strain ATCC 8585 / CBS 2359 / DSM 70799 / NBRC 1267 / NRRL Y-1140 / WM37) (Yeast).